A 313-amino-acid chain; its full sequence is MAVNQSHTESRRGALIPSGESVLKQCEDVDLCFLQKPVESYLFNGTKKGTLFLTSYRVVFVTSHLVNDPMLSFMMPFGLMSDCTIEQPIFAPNYIKGTIQAAPGGGWEGQAVFKLSFRKGGAIEFAQLMVKAASAAARGIPLGSVNYWFDTSGLYIITVPGAAVCSSQTPCPAYPIVIYGPPPPGYTVQPGEYGTPPEGYGAQPGGYGAPPMGYGAPPVGYGVPPGGYGVPPGGYGVPPGGYGAPPGGYGVPPGGYGAPPGGYGAPPAGYGAPPAGNEALPPAYEAPSAGNTAASHRSMTAQQETSLPTTSSS.

One can recognise a GRAM domain in the interval 8–87; the sequence is TESRRGALIP…GLMSDCTIEQ (80 aa). Repeat copies occupy residues 179-185, 193-199, 207-213, 214-220, 221-227, 228-234, 235-241, 242-248, 249-255, 256-262, 263-269, and 270-276. The 12 X 7 AA tandem repeat of Y-G-X-P-P-X-G stretch occupies residues 179–276; that stretch reads YGPPPPGYTV…PAGYGAPPAG (98 aa). Positions 183-186 match the PPxY motif 1 motif; that stretch reads PPGY. A compositionally biased stretch (gly residues) spans 254–264; it reads GGYGAPPGGYG. The segment at 254–313 is disordered; the sequence is GGYGAPPGGYGAPPAGYGAPPAGNEALPPAYEAPSAGNTAASHRSMTAQQETSLPTTSSS. The span at 265 to 276 shows a compositional bias: low complexity; that stretch reads APPAGYGAPPAG. The PPxY motif 2 signature appears at 281 to 284; it reads PPAY. Polar residues predominate over residues 289–313; the sequence is AGNTAASHRSMTAQQETSLPTTSSS.

In terms of tissue distribution, expressed in testis.

May play a role in meiotic resumption and pronuclear formation, mediated by a WW domain-signaling pathway during fertilization. This is Postacrosomal sheath WW domain-binding protein (WBP2NL) from Bos taurus (Bovine).